We begin with the raw amino-acid sequence, 278 residues long: Large ribosomal subunit protein uL2 (278 aa).

A disordered region spans residues 222 to 278 (GVVMNPIDHPHGGGEGRTSGGRHPVTPWGKPTKGKKTRSNKSTDKFILISRHKRKKK).

It belongs to the universal ribosomal protein uL2 family. In terms of assembly, part of the 50S ribosomal subunit. Forms a bridge to the 30S subunit in the 70S ribosome.

One of the primary rRNA binding proteins. Required for association of the 30S and 50S subunits to form the 70S ribosome, for tRNA binding and peptide bond formation. It has been suggested to have peptidyltransferase activity; this is somewhat controversial. Makes several contacts with the 16S rRNA in the 70S ribosome. The sequence is that of Large ribosomal subunit protein uL2 from Rhodopseudomonas palustris (strain ATCC BAA-98 / CGA009).